The sequence spans 884 residues: MDLEANCKEKLSYFRIKELKDVLTQLGLSKQGKKQELVDRILTLLSDEQAARLLSKKNTVAKEAVAKLVDDTYRKMQVSGASDLASKGQVSSDTSNLKVKGEPEDPFQPEIKVRCVCGNSLETDSMIQCEDPRCHVWQHVGCVILPDKPMDGNPPLPESFYCEICRLTRADPFWVTVAHPLSPVRLTATTIPNDGASTMQSVERTFQITRADKDLLAKPEYDVQAWCMLLNDKVLFRMQWPQYADLQVNGVPVRAINRPGGQLLGVNGRDDGPIITSCIRDGVNRISLSGGDVRIFCFGVRLVKRRTLQQVLNLIPEEGKGETFEDALARVRRCIGGGGGDDNADSDSDIEVVADFFGVNLRCPMSGSRIKVAGRFLPCVHMGCFDLDVFVELNQRSRKWQCPICLKNYSVEHVIVDPYFNRITSKMKHCDEEVTEIEVKPDGSWRVKFKRESERRELGELSQWHAPDGSLCPSAVDIKRKMEMLPVKQEGYSDGPAPLKLGIRKNRNGIWEVSKPNTNGLSSSNRQEKVGYQEKNIIPMSSSATGSGRDGDDASVNQDAIGTFDFVANGMELDSISMNVDSGYNFPDRNQSGEGGNNEVIVLSDSDDENDLVITPGPAYSGCQTDGGLTFPLNPPGIINSYNEDPHSIAGGSSGLGLFNDDDEFDTPLWSFPSETPEAPGFQLFRSDADVSGGLVGLHHHSPLNCSPEINGGYTMAPETSMASVPVVPGSTGRSEANDGLVDNPLAFGRDDPSLQIFLPTKPDASAQSGFKNQADMSNGLRSEDWISLRLGDSASGNHGDPATTNGINSSHQMSTREGSMDTTTETASLLLGMNDSRQDKAKKQRSDNPFSFPRQKRSNNEQDHQTRHRSLNKICIILCAGKN.

The 35-residue stretch at leucine 11–leucine 45 folds into the SAP domain. Residues leucine 84–proline 103 are disordered. The span at glycine 88–leucine 97 shows a compositional bias: polar residues. Lysine 100 participates in a covalent cross-link: Glycyl lysine isopeptide (Lys-Gly) (interchain with G-Cter in SUMO). The segment at lysine 112–threonine 168 adopts a PHD-type zinc-finger fold. An SP-RING-type zinc finger spans residues serine 346–histidine 429. Positions 379, 381, 402, and 405 each coordinate Zn(2+). A Glycyl lysine isopeptide (Lys-Gly) (interchain with G-Cter in SUMO) cross-link involves residue lysine 488. 3 disordered regions span residues proline 753–serine 778, glycine 792–threonine 824, and aspartate 836–histidine 869. Polar residues-rich tracts occupy residues serine 766 to serine 778 and alanine 803 to threonine 824. Over residues serine 837–serine 847 the composition is skewed to basic and acidic residues.

The protein belongs to the PIAS family. As to quaternary structure, interacts (via PHD domain) with SCE1, GTE3 and GTE5. Post-translationally, autosumoylated at Lys-100 and Lys-488. In terms of tissue distribution, ubiquitous.

It is found in the nucleus speckle. It participates in protein modification; protein sumoylation. In terms of biological role, E3 SUMO protein ligase involved in regulation processes. Mediates SUMO/ attachment to PHR1, a MYB transcriptional activator controlling the phosphate deficiency responses. Functions as an upstream negative regulator of salicylic acid (SA) accumulation and subsequent SA-mediated systemic acquired resistance (SAR) signaling. Probably not involved in jasmonic acid (JA)-mediated defense response. Participates in abiotic stress-induced sumoylation. Controls heat shock-induced SUMO1 and SUMO2 conjugation and facilitates basal thermotolerance. Involved in freezing tolerance by mediating sumoylation of ICE1, a transcription activator of the cold signaling regulator CBF3/DREB1A. Acts as a positive regulator of drought stress tolerance. Acts as a floral repressor that promotes FLC expression by repressing FLD activity through sumoylation. Acts as a negative regulator of abscisic acid (ABA) signaling through ABI5 sumoylation. Mediates sumoylation of SCE1, GTE3 and GTE5. Functions as a negative regulator of SnRK1 signaling through sumoylation of several components of the SnRK1 complex. The protein is E3 SUMO-protein ligase SIZ1 of Arabidopsis thaliana (Mouse-ear cress).